The sequence spans 99 residues: Acylphosphatase (99 aa).

Positions isoleucine 5–serine 97 constitute an Acylphosphatase-like domain. Active-site residues include arginine 20 and asparagine 38.

Belongs to the acylphosphatase family.

It carries out the reaction an acyl phosphate + H2O = a carboxylate + phosphate + H(+). The polypeptide is Acylphosphatase (acyP) (Rhodopseudomonas palustris (strain ATCC BAA-98 / CGA009)).